A 90-amino-acid polypeptide reads, in one-letter code: Mucin-like protein 1 (90 aa).

The first 20 residues, 1–20 (MKFLAVLVLLGVSIFLVSAQ), serve as a signal peptide directing secretion. O-linked (GalNAc...) threonine glycans are attached at residues threonine 23, threonine 24, threonine 30, threonine 34, threonine 46, threonine 47, threonine 51, threonine 52, threonine 54, threonine 55, threonine 59, threonine 60, threonine 62, and threonine 63. Low complexity-rich tracts occupy residues 25–36 (AAPADTYPATGP) and 44–68 (AETT…ASTT). The disordered stretch occupies residues 25–68 (AAPADTYPATGPADDEAPDAETTAAATTATTAAPTTATTAASTT). 3 tandem repeats follow at residues 46-53 (TTAAATTA), 54-61 (TTAAPTTA), and 62-69 (TTAASTTA). Residues 46–69 (TTAAATTATTAAPTTATTAASTTA) form a 3 X 8 AA tandem repeat of T-T-A-A-[APS]-T-T-A region. O-linked (GalNAc...) serine glycosylation is present at serine 66. 2 O-linked (GalNAc...) threonine glycosylation sites follow: threonine 67 and threonine 68.

In terms of processing, O-glycosylated. As to expression, expressed in mammary, salivary glands and prostate. Also detected in lung. Mainly expressed in cancer cell lines of breast origin. Highly expressed in lymph node-positive compared with node-negative tumors. Detected in all lymph node containing metastatic cells.

The protein resides in the secreted. The protein localises to the membrane. Its function is as follows. May play a role as marker for the diagnosis of metastatic breast cancer. In Homo sapiens (Human), this protein is Mucin-like protein 1 (MUCL1).